Here is a 217-residue protein sequence, read N- to C-terminus: Uracil-DNA glycosylase (217 aa).

The active-site Proton acceptor is the Asp-62.

Belongs to the uracil-DNA glycosylase (UDG) superfamily. UNG family.

It localises to the cytoplasm. The catalysed reaction is Hydrolyzes single-stranded DNA or mismatched double-stranded DNA and polynucleotides, releasing free uracil.. Its function is as follows. Excises uracil residues from the DNA which can arise as a result of misincorporation of dUMP residues by DNA polymerase or due to deamination of cytosine. In Streptococcus suis (strain 98HAH33), this protein is Uracil-DNA glycosylase.